The sequence spans 1355 residues: Phosphoribosylformylglycinamidine synthase (1355 aa).

ATP is bound by residues 326–337 and 406–408; these read GAETGTGGRLRD and IGF. Mg(2+) contacts are provided by Glu743, Asn747, and Asp911. ATP is bound at residue Ser913. A Glutamine amidotransferase type-1 domain is found at 1087-1325; it reads KVAVIREEGS…LSWQWPFMPE (239 aa). The active-site Nucleophile is Cys1182. Residues His1310 and Glu1312 contribute to the active site.

In the N-terminal section; belongs to the FGAMS family.

It is found in the cytoplasm. The enzyme catalyses N(2)-formyl-N(1)-(5-phospho-beta-D-ribosyl)glycinamide + L-glutamine + ATP + H2O = 2-formamido-N(1)-(5-O-phospho-beta-D-ribosyl)acetamidine + L-glutamate + ADP + phosphate + H(+). It participates in purine metabolism; IMP biosynthesis via de novo pathway; 5-amino-1-(5-phospho-D-ribosyl)imidazole from N(2)-formyl-N(1)-(5-phospho-D-ribosyl)glycinamide: step 1/2. In terms of biological role, phosphoribosylformylglycinamidine synthase involved in the purines biosynthetic pathway. Catalyzes the ATP-dependent conversion of formylglycinamide ribonucleotide (FGAR) and glutamine to yield formylglycinamidine ribonucleotide (FGAM) and glutamate. This chain is Phosphoribosylformylglycinamidine synthase (purL), found in Dictyostelium discoideum (Social amoeba).